The chain runs to 355 residues: MSVLPFLRIYAPLNAVLAAPGLLAVAALTIPDMSGRSRLALAALLAVIWGAYLLQLAATLLKRRAGVVRDRTPKIAIDVLAVLVPLAAFLLDGSPDWSLYCAVWLLKPLRDSTFFPVLGRVLANEARNLIGVTTLFGVVLFAVALAAYVIERDIQPEKFGSIPQAMWWAVVTLSTTGYGDTIPQSFAGRVLAGAVMMSGIGIFGLWAGILATGFYQEVRRGDFVRNWQLVAAVPLFQKLGPAVLVEIVRALRARTVPAGAVICRIGEPGDRMFFVVEGSVSVATPNPVELGPGAFFGEMALISGEPRSATVSAATTVSLLSLHSADFQMLCSSSPEIAEIFRKTALERRGAAASA.

Topologically, residues 1 to 12 (MSVLPFLRIYAP) are cytoplasmic. Residues 13-30 (LNAVLAAPGLLAVAALTI) traverse the membrane as a helical segment. Residues 31-38 (PDMSGRSR) lie on the Periplasmic side of the membrane. Residues 39–61 (LALAALLAVIWGAYLLQLAATLL) traverse the membrane as a helical segment. At 62 to 74 (KRRAGVVRDRTPK) the chain is on the cytoplasmic side. Residues 75–94 (IAIDVLAVLVPLAAFLLDGS) traverse the membrane as a helical segment. Residues 95–112 (PDWSLYCAVWLLKPLRDS) form a helical membrane-spanning segment. Residues 113–129 (TFFPVLGRVLANEARNL) lie on the Cytoplasmic side of the membrane. Residues 130 to 150 (IGVTTLFGVVLFAVALAAYVI) traverse the membrane as a helical segment. Residues 151–161 (ERDIQPEKFGS) are Periplasmic-facing. An intramembrane region (pore-forming) is located at residues 162–180 (IPQAMWWAVVTLSTTGYGD). The short motif at 175-180 (TTGYGD) is the Selectivity filter element. At 181-185 (TIPQS) the chain is on the periplasmic side. The chain crosses the membrane as a helical span at residues 186–210 (FAGRVLAGAVMMSGIGIFGLWAGIL). Residues 211–355 (ATGFYQEVRR…LERRGAAASA (145 aa)) are Cytoplasmic-facing. 3',5'-cyclic AMP is bound by residues 297 to 298 (GE), 307 to 308 (RS), and Arg-348.

It belongs to the potassium channel family. As to quaternary structure, homotetramer.

It is found in the cell membrane. Functionally, cyclic nucleotide-regulated potassium channel activated by cAMP. This is Cyclic nucleotide-gated potassium channel mll3241 from Mesorhizobium japonicum (strain LMG 29417 / CECT 9101 / MAFF 303099) (Mesorhizobium loti (strain MAFF 303099)).